Here is a 212-residue protein sequence, read N- to C-terminus: Large ribosomal subunit protein uL3 (212 aa).

The segment at 134-154 (RKTHGNSVSHRVPGSIGQNQT) is disordered. Q153 carries the N5-methylglutamine modification.

This sequence belongs to the universal ribosomal protein uL3 family. As to quaternary structure, part of the 50S ribosomal subunit. Forms a cluster with proteins L14 and L19. Post-translationally, methylated by PrmB.

One of the primary rRNA binding proteins, it binds directly near the 3'-end of the 23S rRNA, where it nucleates assembly of the 50S subunit. This Dichelobacter nodosus (strain VCS1703A) protein is Large ribosomal subunit protein uL3.